The primary structure comprises 540 residues: Probable pectinesterase/pectinesterase inhibitor 60 (540 aa).

A signal peptide spans 1 to 31 (MNIMMVQNISFLSLHLLLILLLCLRPLTTVA). Residues 32-185 (DGNSTNIDGW…SHLISNCLAV (154 aa)) are pectinesterase inhibitor 60. N-linked (GlcNAc...) asparagine glycosylation is found at Asn34, Asn91, Asn95, Asn120, Asn161, and Asn195. The segment at 225 to 526 (NLVVAKDGSG…FSVGKFIAGT (302 aa)) is pectinesterase 60. Residues Thr302 and Gln332 each coordinate substrate. Asp355 functions as the Proton donor; for pectinesterase activity in the catalytic mechanism. Cys369 and Cys389 are joined by a disulfide. Asp376 serves as the catalytic Nucleophile; for pectinesterase activity. Residues Arg444 and Trp446 each contribute to the substrate site.

In the N-terminal section; belongs to the PMEI family. This sequence in the C-terminal section; belongs to the pectinesterase family. Expressed in siliques.

It is found in the secreted. The protein localises to the cell wall. It carries out the reaction [(1-&gt;4)-alpha-D-galacturonosyl methyl ester](n) + n H2O = [(1-&gt;4)-alpha-D-galacturonosyl](n) + n methanol + n H(+). Its pathway is glycan metabolism; pectin degradation; 2-dehydro-3-deoxy-D-gluconate from pectin: step 1/5. Its function is as follows. Acts in the modification of cell walls via demethylesterification of cell wall pectin. The protein is Probable pectinesterase/pectinesterase inhibitor 60 (PME60) of Arabidopsis thaliana (Mouse-ear cress).